The primary structure comprises 201 residues: Lipopolysaccharide core heptose(II)-phosphate phosphatase (201 aa).

Residues 1-35 (MLAFTLRFIKNKRYLATLAGALVIIAGLTSQHAWS) form the signal peptide.

It belongs to the phosphoglycerate mutase family. Ais subfamily.

The protein localises to the periplasm. It functions in the pathway bacterial outer membrane biogenesis; lipopolysaccharide metabolism. Its function is as follows. Catalyzes the dephosphorylation of heptose(II) of the outer membrane lipopolysaccharide core. This Salmonella paratyphi A (strain AKU_12601) protein is Lipopolysaccharide core heptose(II)-phosphate phosphatase.